We begin with the raw amino-acid sequence, 517 residues long: Ribonuclease Y (517 aa).

Residues 1-21 (MIEVLIGLGAGVAGVGAGYLY) form a helical membrane-spanning segment. Residues 207-273 (LINVVNIKND…TRVIELLVED (67 aa)) form the KH domain. The 94-residue stretch at 333 to 426 (ALAHSLEVAH…VCAADCLSAA (94 aa)) folds into the HD domain.

This sequence belongs to the RNase Y family.

The protein localises to the cell membrane. Its function is as follows. Endoribonuclease that initiates mRNA decay. The sequence is that of Ribonuclease Y from Campylobacter curvus (strain 525.92).